Reading from the N-terminus, the 3354-residue chain is MRYSLVTCYAVLWLLMLVPGSWGQVNRLPFFTNHFFDTYLLISEDTPVGSSVTQLLARDMDNDPLVFGVSGEEASRFFAVEPDTGVVWLRQPLDRETKSEFTVEFSVSDHQGVITRKVNIQVGDVNDNAPTFHNQPYSVRIPENTPVGTPIFIVNATDPDLGAGGSVLYSFQPPSPFFAIDSARGIVTVIQELDYEVTQAYQLTVNATDQDKTRPLSTLANLAIIITDMQDMDPIFINLPYSTNIYEHSPPGTTVRVITAVDQDKGRPRGIGYTIVSGNTNSIFALDYISGALTLNGLLDRENPLYSHGFILTVKGTELNDDRTPSDATVTTTFNILVIDINDNAPEFNSSEYSVAITELAQVGFALPLFIQVVDKDEDLGLNSMFEVYLVGNNSHHFIISPTSVQGKADIRIRVAIPLDYETVDRYDFDLFANESVPDHVGYAKVKITLINENDNRPIFSQPLYNVSLYENITVGTSVLTVLATDNDVGTFGEVNYFFSDDPDRFSLDKDTGLIMLIARLDYELIQRFTLTVIARDGGGEETTGRVRINVLDVNDNVPTFQKDAYVGALRENEPSVTQLVRLRATDEDSPPNNLITYSIVNASAFGSYFDISIYEGYGVISVSRPLDYEQIPNGLIYLTVMAKDAGNPPLYSTVPVTIEVFDENDNPPTFSKPAYFVSVLENIMAGATVLFLNATDLDRSREYGQESIIYSLEGSSQFRINARSGEITTTSLLDRETKSEYILIVRAVDGGVGHNQKTGIATVNVTLLDINDNHPTWKDAPYYINLVEMTPPDSDVTTVVAVDPDLGENGTLVYSIHPPNKFYSLNSTTGKIRTTHVMLDRENPDPVEAELMRKIIVSVTDCGRPPLKATSSATVFVNLLDLNDNDPTFRNLPFVAEILEGTPAGVSVYQVVAIDLDEGLNGLVSYRMQVGMPRMDFVINSTSGVVTTTAELDRERIAEYQLRVVASDAGTPTKSSTSTLTVRVLDVNDETPTFFPAVYNVSVSEDVPREFRVVWLNCTDNDVGLNAELSYFITAGNVDGKFSVGYRDAVVRTVVGLDRETTAAYTLVLEAIDNGPVGKRRTGTATVFVTVLDVNDNRPIFLQSSYEASVPEDIPEGHSIVQLKATDADEGEFGRVWYRILHGNHGNNFRIHVGSGLLMRGPRPLDRERNSSHVLMVEAYNHDLGPMRSSVRVIVYVEDVNDEAPVFTQQQYNRLGLRETAGIGTSVIVVRATDKDTGDGGLVNYRILSGAEGKFEIDESTGLIVTVDYLDYETKTSYLMNVSATDGAPPFNQGFCSVYVTLLNELDEAVQFSNASYEAVIMENLALGTEIVRVQAYSIDNLNQITYRFDAYTSAQAKALFKIDAITGVITVKGLVDREKGDFYTLTVVADDGGPKVDSTVKVYITVLDENDNSPRFDFTSDSAISVPEDCPVGQRVATVKARDPDAGSNGQVVFSLASGNIAGAFEIITSNDSIGEVFVAKPLDREELDHYILKVVASDRGTPPRKKDHILQVTILDVNDNPPVIESPFGYNVSVNENVGGGTSVVQVRATDRDIGINSVLSYYITEGNEDMTFRMDRISGEIATRPAPPDRERQNFYHLVVTVEDEGTPTLSATTHVYVTIVDENDNAPVFQQPHYEVVLDEGPDTINTSLITVQALDLDEGPNGTVTYAIVAGNIINTFRINKHTGVITAAKELDYEISHGRYTLIVTATDQCPILSHRLTSTTTVLVNVNDINDNVPTFPRDYEGPFDVTEGQPGPRVWTFLAHDRDSGPNGQVEYSVVDGDPLGEFVISPVEGVLRVRKDVELDRETIAFYNLTICARDRGVPPLSSTMLVGIRVLDINDNDPVLLNLPMNVTISENSPVSSFVAHVLASDADSGCNALLTFNITAGNRERAFFINATTGIVTVNRPLDRERIPEYRLTVSVKDNPENPRIARKDFDLLLVSLADENDNHPLFTEGTYQAEVMENSPAGTPLTVLNGPILALDADEDVYAVVTYQLLGTHSDLFVIDNSTGVVTVRSGIIIDREAFSPPFLELLLLAEDIGQLNGTAHLFITILDDNDNWPTFSPPTYTVHLLENCPPGFSVLQVTATDEDSGLNGELVYRIEAGAQDRFLIHPVTGVIRVGNATIDREEQESYRLTVVATDRGTVPLSGTAIVTILIDDINDSRPEFLNPIQTVSVLESAEPGTIIANVTAIDLDLNPKLEYHIISIVAKDDTDRLVPDQEDAFAVNINTGSVMVKSPLNRELVATYEVTLSVIDNASDLPEHSVSVPNAKLTVNILDVNDNTPQFKPFGITYYTERVLEGATPGTTLIAVAAVDPDKGLNGLITYTLLDLTPPGYVQLEDSSAGKVIANRTVDYEEVHWLNFTVRASDNGSPPRAAEIPVYLEIVDINDNNPIFDQPSYQEAVFEDIAVGTVILRVTATDADSGNFALIEYSLVDGEGKFAINPNTGDISVLSSLDREKKDHYILTALAKDNPGDVASNRRENSVQVVIRVLDVNDCRPQFSKPQFSTSVYENEPAGTSVITMLATDQDEGSNSQLTYSLEGPGMEAFSVDMDSGLVTTQRPLQSYERFNLTVVATDGGEPPLWGTTMLLVEVIDVNDNRPVFVRPPNGTILHIKEEIPLRSNVYEVYATDNDEGLNGAVRYSFLKTTGNRDWEYFTIDPISGLIQTAQRLDREKQAVYSLILVASDLGQPVPYETMQPLQVALEDIDDNEPLFVRPPKGSPQYQLLTVPEHSPRGTLVGNVTGAVDADEGPNAIVYYFIAAGDEDKNFHLQPDGRLLVLRDLDRETEATFSFIVKASSNRSWTPPRGPSPALDLLTDLTLQEVRVVLEDINDQPPRFTKAEYTAGVATDAKVGSELIQVLALDADIGNNSLVFYGILAIHYFRALANDSEDVGQVFTMGSVDGILRTFDLFMAYSPGYFVVDIVARDLAGHNDTAIIGIYILRDDQRVKIVINEIPDRVRGFEEEFIRLLSNITGAIVNTDDVQFHVDMKGRVNFAQTELLIHVVNRDTNRILDVDRVIQMIDENKEQLRNLFRNYNVLDVQPAISVQLPDDMSALQMAIIVLAILLFLAAMLFVLMNWYYRTIHKRKLKAIVAGSAGNRGFIDIMDMPNTNKYSFDGSNPVWLDPFCRNLELAAQAEHEDDLPENLSEIADLWNSPTRTHGTFGREPAAVKPDDDRYLRAAIQEYDNIAKLGQIIREGPIKGSLLKVVLEDYLRLKKLFAQRMVQKASSCHSSISELIHTDLEEEPGDHSPGQGSLRFRHKPPMELKGQDGIHMVHGSTGTLLATDLNSLPEDDQKGLDRSLETLTASEATAFERNARTESAKSTPLHKLRDVIMESPLEITEL.

A signal peptide spans 1–23 (MRYSLVTCYAVLWLLMLVPGSWG). Over 24 to 3064 (QVNRLPFFTN…SVQLPDDMSA (3041 aa)) the chain is Extracellular. 27 consecutive Cadherin domains span residues 34 to 132 (HFFD…APTF), 133 to 236 (HNQP…DPIF), 237 to 348 (INLP…APEF), 349 to 460 (NSSE…RPIF), 461 to 561 (SQPL…VPTF), 562 to 671 (QKDA…PPTF), 672 to 784 (SKPA…APYY), 779 to 890 (KDAP…DPTF), 891 to 995 (RNLP…TPTF), 996 to 1102 (FPAV…RPIF), 1103 to 1208 (LQSS…APVF), 1210 to 1313 (QQQY…AVQF), 1314 to 1418 (SNAS…SPRF), 1420 to 1527 (FTSD…PPVI), 1529 to 1634 (SPFG…APVF), 1635 to 1744 (QQPH…VPTF), 1745 to 1851 (PRDY…DPVL), 1852 to 1959 (LNLP…HPLF), 1960 to 2069 (TEGT…WPTF), 2070 to 2174 (SPPT…RPEF), 2175 to 2293 (LNPI…TPQF), 2297 to 2402 (GITY…NPIF), 2403 to 2509 (DQPS…RPQF), 2510 to 2611 (SKPQ…RPVF), 2614 to 2722 (PPNG…EPLF), 2729 to 2846 (SPQY…PPRF), and 2847 to 2975 (TKAE…EEEF). Residues N155 and N206 are each glycosylated (N-linked (GlcNAc...) asparagine). N-linked (GlcNAc...) asparagine glycans are attached at residues N349, N393, N434, N466, N472, N602, N694, N765, N810, N827, N941, N1001, N1018, N1171, N1282, N1315, N1473, N1534, N1651, N1667, N1818, N1857, N1889, N1902, N2014, N2050, N2129, N2168, N2195, N2263, N2357, and N2369. N2578, N2616, N2749, N2808, N2877, N2896, N2941, and N2981 each carry an N-linked (GlcNAc...) asparagine glycan. The chain crosses the membrane as a helical span at residues 3065–3085 (LQMAIIVLAILLFLAAMLFVL). The Cytoplasmic segment spans residues 3086–3354 (MNWYYRTIHK…MESPLEITEL (269 aa)).

Interacts with USH1C and USH1G. antiparallel heterodimer with PCDH15. Isoform C1: Interacts with CAMSAP3; leading to inhibit CAMSAP3 ability to induce microtubule bundle formation. In terms of tissue distribution, in adult animals relatively high levels of expression are found in testis, skeletal muscle, heart, eye and thymus, and lower expression in kidney, lung and brain. Found in the sensory hair cells of the inner ear.

Its subcellular location is the cell membrane. Functionally, cadherins are calcium-dependent cell adhesion proteins. They preferentially interact with themselves in a homophilic manner in connecting cells. CDH23 is required for establishing and/or maintaining the proper organization of the stereocilia bundle of hair cells in the cochlea and the vestibule during late embryonic/early postnatal development. It is part of the functional network formed by USH1C, USH1G, CDH23 and MYO7A that mediates mechanotransduction in cochlear hair cells. Required for normal hearing. This chain is Cadherin-23 (Cdh23), found in Mus musculus (Mouse).